The primary structure comprises 560 residues: Choline/ethanolamine transporter FLVCR1 (560 aa).

The segment at 1-43 (MARPDDEVGPAVAPGHPLGKGYLPVPKGAPDGEARLVPQNGPE) is disordered. Topologically, residues 1–92 (MARPDDEVGP…EDVPCPACPP (92 aa)) are cytoplasmic. Residues 93-117 (RTALSPRRFVVLLIFSLYSLVNAFQ) traverse the membrane as a helical segment. Residues 118–135 (WIQYSSISNVFEDFYEVS) lie on the Extracellular side of the membrane. Residues 136-163 (PLHINWLSMVYMVAYVPLIFPATWLLDT) form a helical membrane-spanning segment. Topologically, residues 164–165 (RG) are cytoplasmic. Residues 166 to 185 (LRLTALLGSGLNCLGAWVKC) traverse the membrane as a helical segment. The Extracellular segment spans residues 186 to 192 (GSVQRHL). The helical transmembrane segment at 193 to 221 (FWVTMLGQILCSVAQVFILGLPSPVASVW) threads the bilayer. Residue Gln207 participates in ethanolamine binding. Over 222 to 226 (FGPKE) the chain is Cytoplasmic. The helical transmembrane segment at 227-252 (VSTACATAVLGNQLGTAVGFLLPPVL) threads the bilayer. Topologically, residues 253–270 (VPALGTQNSTGLLAHTQN) are extracellular. Asn270 carries an N-linked (GlcNAc...) asparagine glycan. A helical membrane pass occupies residues 271–300 (NTDLLAHNINTMFYGTAFISTFLFFLTIIA). Residues 301-336 (FKEKPPLPPSQAQAVLRDSPPEEYSYKSSIWNLCRN) are Cytoplasmic-facing. Residues 337-367 (IPFVLLLVSYGIMTGAFYSISTLLNQIILTY) traverse the membrane as a helical segment. Residues 368–371 (YVGE) lie on the Extracellular side of the membrane. The helical transmembrane segment at 372–400 (EVNAGRIGLTLVVAGMVGSILCGLWLDYT) threads the bilayer. The Cytoplasmic portion of the chain corresponds to 401-402 (KT). The helical transmembrane segment at 403-425 (YKQTTLIVYVLSFIGMLIFTFTL) threads the bilayer. Over 426–428 (NLG) the chain is Extracellular. Residues 429 to 458 (YIIVVFFTGGILGFFMTGYLPLGFEFAVEI) traverse the membrane as a helical segment. The Cytoplasmic segment spans residues 459–466 (TYPESEGM). The helical transmembrane segment at 467–492 (SSGLLNTAAQILGIFFTLAQGKITTD) threads the bilayer. Ethanolamine is bound at residue Gln476. Gln476 is a binding site for choline. The Extracellular portion of the chain corresponds to 493–495 (YNS). A helical membrane pass occupies residues 496–518 (PEAGNIFLCAWMFVGIILTALIK). Residues 519 to 560 (SDLRRHNINTGLTNIDVKAVPVDSRVDPKPKVMVSIQSESSL) are Cytoplasmic-facing. Ser542 is subject to Phosphoserine.

This sequence belongs to the major facilitator superfamily. Feline leukemia virus subgroup C receptor (TC 2.A.1.28.1) family.

The protein localises to the cell membrane. Its subcellular location is the mitochondrion membrane. The catalysed reaction is choline(out) = choline(in). The enzyme catalyses ethanolamine(in) = ethanolamine(out). It carries out the reaction heme b(in) = heme b(out). Its function is as follows. Uniporter that mediates the transport of extracellular choline and ethanolamine into cells, thereby playing a key role in phospholipid biosynthesis. Choline and ethanolamine are the precursors of phosphatidylcholine and phosphatidylethanolamine, respectively, the two most abundant phospholipids. Transport is not coupled with proton transport and is exclusively driven by the choline (or ethanolamine) gradient across the plasma membrane. Also acts as a heme b transporter that mediates heme efflux from the cytoplasm to the extracellular compartment. In terms of biological role, uniporter that mediates the transport of extracellular choline and ethanolamine into cells. Choline and ethanolamine are the precursors of phosphatidylcholine and phosphatidylethanolamine, respectively, the two most abundant phospholipids. Transport is not coupled with proton transport and is exclusively driven by the choline (or ethanolamine) gradient across the plasma membrane. Also acts as a heme b transporter that mediates heme efflux from the cytoplasm to the extracellular compartment. Heme export depends on the presence of HPX and is required to maintain intracellular free heme balance, protecting cells from heme toxicity. Heme export provides protection from heme or ferrous iron toxicities in liver, brain, sensory neurons and during erythropoiesis, a process in which heme synthesis intensifies. Possibly export coproporphyrin and protoporphyrin IX, which are both intermediate products in the heme biosynthetic pathway. Does not export bilirubin. The molecular mechanism of heme transport, whether electrogenic, electroneutral or coupled to other ions, remains to be elucidated. Functionally, heme transporter that promotes heme efflux from the mitochondrion to the cytoplasm. Essential for erythroid differentiation. This is Choline/ethanolamine transporter FLVCR1 (Flvcr1) from Mus musculus (Mouse).